The chain runs to 759 residues: Polyribonucleotide nucleotidyltransferase (759 aa).

The Mg(2+) site is built by Asp-522 and Asp-528. The KH domain occupies 588–647 (PRITTIKVPVDKIGEVIGPKGKMINSITEETGASISIEDDGTVFVGASNGEAAQAAIDKI). An S1 motif domain is found at 659–728 (GERFLGTVVK…NRGKISLVLV (70 aa)). A disordered region spans residues 734 to 759 (AEASDNGSATPSDKAPATADATTAGN). A compositionally biased stretch (low complexity) spans 741 to 759 (SATPSDKAPATADATTAGN).

This sequence belongs to the polyribonucleotide nucleotidyltransferase family. It depends on Mg(2+) as a cofactor.

The protein resides in the cytoplasm. The enzyme catalyses RNA(n+1) + phosphate = RNA(n) + a ribonucleoside 5'-diphosphate. Functionally, involved in mRNA degradation. Catalyzes the phosphorolysis of single-stranded polyribonucleotides processively in the 3'- to 5'-direction. In Mycobacterium sp. (strain JLS), this protein is Polyribonucleotide nucleotidyltransferase.